A 136-amino-acid chain; its full sequence is Peptide deformylase (136 aa).

Residues C85 and H126 each coordinate Fe cation. E127 is an active-site residue. Residue H130 coordinates Fe cation.

It belongs to the polypeptide deformylase family. Fe(2+) serves as cofactor.

It carries out the reaction N-terminal N-formyl-L-methionyl-[peptide] + H2O = N-terminal L-methionyl-[peptide] + formate. In terms of biological role, removes the formyl group from the N-terminal Met of newly synthesized proteins. Requires at least a dipeptide for an efficient rate of reaction. N-terminal L-methionine is a prerequisite for activity but the enzyme has broad specificity at other positions. The protein is Peptide deformylase of Clostridium beijerinckii (strain ATCC 51743 / NCIMB 8052) (Clostridium acetobutylicum).